The chain runs to 512 residues: Sodium/proline symporter (512 aa).

The next 13 helical transmembrane spans lie at tryptophan 16–glycine 36, isoleucine 54–methionine 74, leucine 85–valine 105, isoleucine 139–serine 159, phenylalanine 174–alanine 194, phenylalanine 200–asparagine 220, leucine 240–phenylalanine 260, isoleucine 286–phenylalanine 306, valine 327–serine 347, phenylalanine 381–tryptophan 401, leucine 410–leucine 430, alanine 438–isoleucine 458, and isoleucine 467–valine 487.

It belongs to the sodium:solute symporter (SSF) (TC 2.A.21) family.

It localises to the cell membrane. It catalyses the reaction L-proline(in) + Na(+)(in) = L-proline(out) + Na(+)(out). Catalyzes the sodium-dependent uptake of extracellular L-proline. Since most S.aureus strains are L-proline auxotrophs, this transporter may aid the bacterial persistence during an infection of tissues with low proline concentrations. This chain is Sodium/proline symporter (putP), found in Staphylococcus aureus (strain Newman).